The primary structure comprises 416 residues: UPF0761 membrane protein Rfer_2991 (416 aa).

A run of 6 helical transmembrane segments spans residues 60–80 (MALV…PMFA), 117–137 (LGGA…LTID), 156–176 (VLVY…SLSI), 187–207 (VVGV…FFMV), 222–242 (WVKW…LELA), and 268–288 (ILLI…VIAA).

It belongs to the UPF0761 family.

Its subcellular location is the cell inner membrane. This chain is UPF0761 membrane protein Rfer_2991, found in Albidiferax ferrireducens (strain ATCC BAA-621 / DSM 15236 / T118) (Rhodoferax ferrireducens).